A 377-amino-acid chain; its full sequence is Nitric oxide reductase FlRd-NAD(+) reductase (377 aa).

The protein belongs to the FAD-dependent oxidoreductase family. The cofactor is FAD.

It localises to the cytoplasm. It catalyses the reaction 2 reduced [nitric oxide reductase rubredoxin domain] + NAD(+) + H(+) = 2 oxidized [nitric oxide reductase rubredoxin domain] + NADH. It functions in the pathway nitrogen metabolism; nitric oxide reduction. Functionally, one of at least two accessory proteins for anaerobic nitric oxide (NO) reductase. Reduces the rubredoxin moiety of NO reductase. In Shigella boydii serotype 4 (strain Sb227), this protein is Nitric oxide reductase FlRd-NAD(+) reductase (norW).